The sequence spans 292 residues: tRNA pseudouridine synthase B (292 aa).

Asp38 acts as the Nucleophile in catalysis.

It belongs to the pseudouridine synthase TruB family. Type 1 subfamily.

The enzyme catalyses uridine(55) in tRNA = pseudouridine(55) in tRNA. Functionally, responsible for synthesis of pseudouridine from uracil-55 in the psi GC loop of transfer RNAs. The sequence is that of tRNA pseudouridine synthase B from Streptococcus pneumoniae serotype 4 (strain ATCC BAA-334 / TIGR4).